Here is a 310-residue protein sequence, read N- to C-terminus: Porphobilinogen deaminase (310 aa).

An S-(dipyrrolylmethanemethyl)cysteine modification is found at Cys242.

It belongs to the HMBS family. In terms of assembly, monomer. Dipyrromethane serves as cofactor.

It carries out the reaction 4 porphobilinogen + H2O = hydroxymethylbilane + 4 NH4(+). Its pathway is porphyrin-containing compound metabolism; protoporphyrin-IX biosynthesis; coproporphyrinogen-III from 5-aminolevulinate: step 2/4. Functionally, tetrapolymerization of the monopyrrole PBG into the hydroxymethylbilane pre-uroporphyrinogen in several discrete steps. In Halorhodospira halophila (strain DSM 244 / SL1) (Ectothiorhodospira halophila (strain DSM 244 / SL1)), this protein is Porphobilinogen deaminase.